Reading from the N-terminus, the 271-residue chain is Monalysin (271 aa).

A propeptide spanning residues 1–33 is cleaved from the precursor; the sequence is MTIKEELGQPQSHSIELDEVSKEAASTRAALTS. Residues 102–170 form a pore-forming domain region; the sequence is IPQNVTTTLS…FTDTTEMKGP (69 aa).

In terms of assembly, pro-Monalysin forms a stable donut-like 18-mer complex composed of two disk-shaped nonamers held together by N-terminal swapping of the pro-peptides. After proteolytic cleavage, the inactive 18-mer complex probably dissociates into two disk-shaped active nonamers in which the transmembrane segments are unmasked and ready to engage the conformational change leading to the pore formation into the target membrane. Multimerizes into circular-like structures and barrel-like aggregates. Post-translationally, requires N-terminal cleavage to become fully active. The metalloprotease AprA can induce the rapid cleavage of pro-Monalysin into its active form. Can also be processed by trypsin.

It localises to the secreted. The protein resides in the host cell membrane. Its function is as follows. Pore-forming toxin that contributes to the virulence of P.entomophila against Drosophila, playing an important role in host intestinal damage and lethality. Displays cytolytic and hemolytic activity. This chain is Monalysin, found in Pseudomonas entomophila (strain L48).